We begin with the raw amino-acid sequence, 260 residues long: Voltage-dependent calcium channel gamma-6 subunit (260 aa).

4 helical membrane passes run 43–63 (LLVA…EFWV), 143–163 (VIAV…IMVL), 169–189 (SLLR…FVSL), and 221–241 (LGCG…FLLL).

It belongs to the PMP-22/EMP/MP20 family. CACNG subfamily. As to quaternary structure, interacts with CACNA1C. Identified in a complex with the L-type calcium channel subunits CACNA1C, CACNA2D1 and either CACNB1 or CACNB2. Detected in brain and heart (at protein level).

The protein resides in the cell membrane. Its function is as follows. Regulates the activity of L-type calcium channels that contain CACNA1C as pore-forming subunit. In Mus musculus (Mouse), this protein is Voltage-dependent calcium channel gamma-6 subunit (Cacng6).